A 177-amino-acid chain; its full sequence is Cytochrome c-type biogenesis protein CcmE (177 aa).

Residues 1–8 lie on the Cytoplasmic side of the membrane; that stretch reads MNPRRKSR. The chain crosses the membrane as a helical; Signal-anchor for type II membrane protein span at residues 9–29; sequence LKVVMAVLSGLAVAVGLTLYA. The Periplasmic segment spans residues 30–177; sequence LSQNIDLFYT…QISQPFGENK (148 aa). Positions 131 and 135 each coordinate heme. Positions 134-177 are disordered; the sequence is NYMPPELGDQMKKQHQPMGISEADLKGKSERDATQISQPFGENK. The segment covering 156–166 has biased composition (basic and acidic residues); the sequence is ADLKGKSERDA. Over residues 167–177 the composition is skewed to polar residues; that stretch reads TQISQPFGENK.

The protein belongs to the CcmE/CycJ family.

The protein localises to the cell inner membrane. In terms of biological role, heme chaperone required for the biogenesis of c-type cytochromes. Transiently binds heme delivered by CcmC and transfers the heme to apo-cytochromes in a process facilitated by CcmF and CcmH. In Glaesserella parasuis serovar 5 (strain SH0165) (Haemophilus parasuis), this protein is Cytochrome c-type biogenesis protein CcmE.